Reading from the N-terminus, the 510-residue chain is Maturase K (510 aa).

The protein belongs to the intron maturase 2 family. MatK subfamily.

The protein resides in the plastid. Its subcellular location is the chloroplast. Its function is as follows. Usually encoded in the trnK tRNA gene intron. Probably assists in splicing its own and other chloroplast group II introns. This Mammillaria haageana (Cactus) protein is Maturase K.